We begin with the raw amino-acid sequence, 411 residues long: Diaminobutyrate--2-oxoglutarate transaminase (411 aa).

An N6-(pyridoxal phosphate)lysine modification is found at Lys-262.

Belongs to the class-III pyridoxal-phosphate-dependent aminotransferase family. The cofactor is pyridoxal 5'-phosphate.

The enzyme catalyses L-2,4-diaminobutanoate + 2-oxoglutarate = L-aspartate 4-semialdehyde + L-glutamate. It functions in the pathway amine and polyamine biosynthesis; ectoine biosynthesis; L-ectoine from L-aspartate 4-semialdehyde: step 1/3. Catalyzes reversively the conversion of L-aspartate beta-semialdehyde (ASA) to L-2,4-diaminobutyrate (DABA) by transamination with L-glutamate. The sequence is that of Diaminobutyrate--2-oxoglutarate transaminase (ectB) from Vibrio cholerae serotype O1 (strain ATCC 39315 / El Tor Inaba N16961).